Reading from the N-terminus, the 232-residue chain is uncharacterized protein (232 aa).

Residues methionine 1–aspartate 46 form a disordered region. Positions serine 28–aspartate 46 are enriched in basic and acidic residues.

This is an uncharacterized protein from Rhizobium meliloti (Ensifer meliloti).